Consider the following 452-residue polypeptide: Lamina-associated polypeptide 2, isoform beta (452 aa).

Residues 1 to 409 are nucleoplasmic; it reads MPEFLEDPSV…KSEKTKKGRS (409 aa). An LEM-like domain is found at 5–48; that stretch reads LEDPSVLTKDKLKSELVANNVTLPAGEQRKDVYVQLYLQHLTAR. Disordered stretches follow at residues 48 to 113 and 149 to 264; these read RNRP…DVTE and REQG…VEPS. A linker region spans residues 49 to 107; it reads NRPPLAAGANSKGPPDFSSDEEREPTPVLGSGASVGRGRGAVGRKATKKTDKPRPEDKD. Phosphoserine is present on residues serine 66 and serine 67. A Phosphothreonine modification is found at threonine 74. Serine 82 is modified (phosphoserine). Omega-N-methylarginine occurs at positions 85 and 87. Over residues 96–105 the composition is skewed to basic and acidic residues; sequence KKTDKPRPED. An LEM domain is found at 108–152; sequence DLDVTELSNEELLEQLVRYGVNPGPIVGTTRKLYEKKLLKLREQG. The segment at 137 to 242 is NAKAP95-binding N; it reads TRKLYEKKLL…TSGSSKGGPL (106 aa). Polar residues predominate over residues 154-177; sequence ESRSSTPLPTVSSSAENTRQNGSN. 2 positions are modified to phosphoserine: serine 155 and serine 158. Residue threonine 159 is modified to Phosphothreonine. 5 positions are modified to phosphoserine: serine 165, serine 167, serine 176, serine 179, and serine 183. Basic and acidic residues predominate over residues 178 to 202; it reads DSDRYSDNDEDSKIELKLEKREPLK. Position 206 is an N6-acetyllysine (lysine 206). Residues 298–370 are binds lamins B; the sequence is TGNFKHASSI…SCRRPIKGAA (73 aa). Positions 299–373 are NAKAP95-binding C; sequence GNFKHASSIL…RPIKGAAGRP (75 aa). 3 positions are modified to phosphoserine: serine 305, serine 306, and serine 361. Lysine 388 carries the post-translational modification N6-acetyllysine. The chain crosses the membrane as a helical; Signal-anchor for type II membrane protein span at residues 410 to 430; it reads VPMWIKMLLFALVAGFLFLVY. The Lumenal segment spans residues 431 to 452; the sequence is QAMETNQGNPFTNFLQDTKISN.

This sequence belongs to the LEM family. Interacts with LMNB1, LMNB2, BANF1, AKAP8L, GMCL and chromosomes. Mitosis-specific phosphorylation specifically abolishes its binding to lamin B and chromosomes.

The protein localises to the nucleus inner membrane. It localises to the chromosome. Functionally, binds directly to lamin B1 and chromosomes in a mitotic phosphorylation-regulated manner. May play an important role in nuclear envelope reassembly at the end of mitosis and/or anchoring of the nuclear lamina and interphase chromosomes to the nuclear envelope. In Rattus norvegicus (Rat), this protein is Lamina-associated polypeptide 2, isoform beta (Tmpo).